Consider the following 237-residue polypeptide: MSIHIAAQQGEIADKILLPGDPLRAKFIAENFLEDAVCFNEVRNMFGYTGTYKGHRVSVMGTGMGMPSISIYARELIVDYGVKKLIRVGTAGSLNEDVHVRELVLAQAAATNSNIIRNDWPQYDFPQIASFDLLDKAYHIAKDLGMTTHVGNVLSSDVFYSNYFEKNIELGKWGVKAVEMEAAALYYLAAQHHVDALAIMTISDSLVNPEEDTTAEERQNTFTDMMKVGLETLIAEA.

His4 serves as a coordination point for a purine D-ribonucleoside. Residues Gly20, Arg24, Arg43, and 87–90 (RVGT) contribute to the phosphate site. A purine D-ribonucleoside is bound by residues 179-181 (EME) and 203-204 (SD). Catalysis depends on Asp204, which acts as the Proton donor.

It belongs to the PNP/UDP phosphorylase family. Homohexamer; trimer of homodimers.

The enzyme catalyses a purine D-ribonucleoside + phosphate = a purine nucleobase + alpha-D-ribose 1-phosphate. It catalyses the reaction a purine 2'-deoxy-D-ribonucleoside + phosphate = a purine nucleobase + 2-deoxy-alpha-D-ribose 1-phosphate. Catalyzes the reversible phosphorolytic breakdown of the N-glycosidic bond in the beta-(deoxy)ribonucleoside molecules, with the formation of the corresponding free purine bases and pentose-1-phosphate. In Streptococcus gordonii (strain Challis / ATCC 35105 / BCRC 15272 / CH1 / DL1 / V288), this protein is Purine nucleoside phosphorylase DeoD-type.